The primary structure comprises 81 residues: Photosystem I iron-sulfur center (81 aa).

4Fe-4S ferredoxin-type domains lie at 1-31 (MSHTVKIYDTCIGCTQCVRACPTDVLEMVPW) and 37-68 (GQIASSPRTEDCVGCKRCETACPTDFLSIRVY). [4Fe-4S] cluster contacts are provided by Cys11, Cys14, Cys17, Cys21, Cys48, Cys51, Cys54, and Cys58.

In terms of assembly, the cyanobacterial PSI reaction center is composed of one copy each of PsaA,B,C,D,E,F,I,J,K,L,M and X, and forms trimeric complexes. The cofactor is [4Fe-4S] cluster.

The protein localises to the cellular thylakoid membrane. The catalysed reaction is reduced [plastocyanin] + hnu + oxidized [2Fe-2S]-[ferredoxin] = oxidized [plastocyanin] + reduced [2Fe-2S]-[ferredoxin]. Its function is as follows. Apoprotein for the two 4Fe-4S centers FA and FB of photosystem I (PSI); essential for photochemical activity. FB is the terminal electron acceptor of PSI, donating electrons to ferredoxin. The C-terminus interacts with PsaA/B/D and helps assemble the protein into the PSI complex. Required for binding of PsaD and PsaE to PSI. PSI is a plastocyanin/cytochrome c6-ferredoxin oxidoreductase, converting photonic excitation into a charge separation, which transfers an electron from the donor P700 chlorophyll pair to the spectroscopically characterized acceptors A0, A1, FX, FA and FB in turn. This is Photosystem I iron-sulfur center from Acaryochloris marina (strain MBIC 11017).